The sequence spans 368 residues: POU domain, class 3, transcription factor 1 (368 aa).

Polar residues predominate over residues 1-16 (MATTAQYIPRNNSLPS). 4 disordered regions span residues 1-28 (MATT…DRMH), 69-88 (TDWT…ASVQ), 100-134 (SHLV…NGHQ), and 147-193 (SPQP…PSSD). Positions 79-88 (QAEHNKASVQ) are enriched in basic and acidic residues. Over residues 105 to 134 (QPTQNSHHGSWAPTTTHHLSPLSPASNGHQ) the composition is skewed to polar residues. Residues 155-170 (GLRDPLHDDAGSHDNQ) are compositionally biased toward basic and acidic residues. A POU-specific domain is found at 187–261 (EDAPSSDDLE…LLNKWLEETD (75 aa)). Residues 279–338 (KRKKRTSIEVGVKGALENHFLKCPKPSAHEITTLAGTLQLEKEVVRVWFCNRRQKEKRMT) constitute a DNA-binding region (homeobox).

It belongs to the POU transcription factor family. Class-3 subfamily. As to expression, predominantly expressed in the embryonic and adult central nervous system.

The protein localises to the nucleus. Transcription factor that may play important roles in patterning the embryonic brain. Could directly respond to the reception of the sonic hedgehog (shh) signal. The protein is POU domain, class 3, transcription factor 1 (pou3f1) of Danio rerio (Zebrafish).